The sequence spans 957 residues: Glycine dehydrogenase (decarboxylating) (957 aa).

N6-(pyridoxal phosphate)lysine is present on Lys708.

It belongs to the GcvP family. In terms of assembly, the glycine cleavage system is composed of four proteins: P, T, L and H. It depends on pyridoxal 5'-phosphate as a cofactor.

It carries out the reaction N(6)-[(R)-lipoyl]-L-lysyl-[glycine-cleavage complex H protein] + glycine + H(+) = N(6)-[(R)-S(8)-aminomethyldihydrolipoyl]-L-lysyl-[glycine-cleavage complex H protein] + CO2. Its function is as follows. The glycine cleavage system catalyzes the degradation of glycine. The P protein binds the alpha-amino group of glycine through its pyridoxal phosphate cofactor; CO(2) is released and the remaining methylamine moiety is then transferred to the lipoamide cofactor of the H protein. This Cronobacter sakazakii (strain ATCC BAA-894) (Enterobacter sakazakii) protein is Glycine dehydrogenase (decarboxylating).